The following is a 156-amino-acid chain: SsrA-binding protein (156 aa).

Positions 135-150 (KRDTIKDREWQRDRSR) are enriched in basic and acidic residues. The interval 135-156 (KRDTIKDREWQRDRSRIMKKNT) is disordered.

Belongs to the SmpB family.

It localises to the cytoplasm. In terms of biological role, required for rescue of stalled ribosomes mediated by trans-translation. Binds to transfer-messenger RNA (tmRNA), required for stable association of tmRNA with ribosomes. tmRNA and SmpB together mimic tRNA shape, replacing the anticodon stem-loop with SmpB. tmRNA is encoded by the ssrA gene; the 2 termini fold to resemble tRNA(Ala) and it encodes a 'tag peptide', a short internal open reading frame. During trans-translation Ala-aminoacylated tmRNA acts like a tRNA, entering the A-site of stalled ribosomes, displacing the stalled mRNA. The ribosome then switches to translate the ORF on the tmRNA; the nascent peptide is terminated with the 'tag peptide' encoded by the tmRNA and targeted for degradation. The ribosome is freed to recommence translation, which seems to be the essential function of trans-translation. The polypeptide is SsrA-binding protein (Legionella pneumophila (strain Paris)).